We begin with the raw amino-acid sequence, 395 residues long: Univin (395 aa).

An N-terminal signal peptide occupies residues 1–19; sequence MDVSKVLILTLIWLLTADS. A propeptide spanning residues 20 to 272 is cleaved from the precursor; the sequence is APPDYVTLTR…CSKRNRRNKR (253 aa). N-linked (GlcNAc...) asparagine glycosylation occurs at N50. The segment at 69 to 97 is disordered; that stretch reads EGAAASRGGETEIGKEEEEDGRPCSETKL. N-linked (GlcNAc...) asparagine glycosylation is found at N116 and N336. 3 cysteine pairs are disulfide-bonded: C294-C360, C323-C392, and C327-C394.

It belongs to the TGF-beta family. As to quaternary structure, homodimer; disulfide-linked.

Its subcellular location is the secreted. Its function is as follows. Could have a critical role in early developmental decisions in the sea urchin embryo. The sequence is that of Univin from Strongylocentrotus purpuratus (Purple sea urchin).